Consider the following 100-residue polypeptide: Urease subunit gamma (100 aa).

This sequence belongs to the urease gamma subunit family. In terms of assembly, heterotrimer of UreA (gamma), UreB (beta) and UreC (alpha) subunits. Three heterotrimers associate to form the active enzyme.

The protein resides in the cytoplasm. The enzyme catalyses urea + 2 H2O + H(+) = hydrogencarbonate + 2 NH4(+). It participates in nitrogen metabolism; urea degradation; CO(2) and NH(3) from urea (urease route): step 1/1. This Synechococcus sp. (strain WH7805) protein is Urease subunit gamma.